We begin with the raw amino-acid sequence, 218 residues long: Probable transaldolase (218 aa).

Lysine 87 acts as the Schiff-base intermediate with substrate in catalysis.

It belongs to the transaldolase family. Type 3B subfamily.

Its subcellular location is the cytoplasm. The enzyme catalyses D-sedoheptulose 7-phosphate + D-glyceraldehyde 3-phosphate = D-erythrose 4-phosphate + beta-D-fructose 6-phosphate. It participates in carbohydrate degradation; pentose phosphate pathway; D-glyceraldehyde 3-phosphate and beta-D-fructose 6-phosphate from D-ribose 5-phosphate and D-xylulose 5-phosphate (non-oxidative stage): step 2/3. Transaldolase is important for the balance of metabolites in the pentose-phosphate pathway. This Phocaeicola vulgatus (strain ATCC 8482 / DSM 1447 / JCM 5826 / CCUG 4940 / NBRC 14291 / NCTC 11154) (Bacteroides vulgatus) protein is Probable transaldolase.